Consider the following 176-residue polypeptide: Large ribosomal subunit protein bL19 (176 aa).

The protein belongs to the bacterial ribosomal protein bL19 family.

This protein is located at the 30S-50S ribosomal subunit interface and may play a role in the structure and function of the aminoacyl-tRNA binding site. This chain is Large ribosomal subunit protein bL19, found in Sinorhizobium fredii (strain NBRC 101917 / NGR234).